A 90-amino-acid chain; its full sequence is Probable acyl carrier protein (90 aa).

Residues 9 to 90 (QVTVEELSAL…LVNGALKTGV (82 aa)) enclose the Carrier domain. The residue at position 47 (Ser-47) is an O-(pantetheine 4'-phosphoryl)serine.

4'-phosphopantetheine is transferred from CoA to a specific serine of the apo-ACP-like protein.

Functionally, involved in developmentally regulated synthesis of a compound biosynthetically related to polyketide antibiotics which is essential for spore color in Streptomyces coelicolor. This is Probable acyl carrier protein from Streptomyces coelicolor (strain ATCC BAA-471 / A3(2) / M145).